Here is a 243-residue protein sequence, read N- to C-terminus: Pyridoxine 5'-phosphate synthase (243 aa).

Asn7 lines the 3-amino-2-oxopropyl phosphate pocket. 1-deoxy-D-xylulose 5-phosphate is bound at residue Asp9–His10. Position 18 (Arg18) interacts with 3-amino-2-oxopropyl phosphate. Catalysis depends on His43, which acts as the Proton acceptor. Residues Arg45 and His50 each contribute to the 1-deoxy-D-xylulose 5-phosphate site. Glu70 acts as the Proton acceptor in catalysis. Residue Thr100 coordinates 1-deoxy-D-xylulose 5-phosphate. His190 acts as the Proton donor in catalysis. Residues Gly191 and Gly212–His213 contribute to the 3-amino-2-oxopropyl phosphate site.

Belongs to the PNP synthase family. Homooctamer; tetramer of dimers.

It localises to the cytoplasm. It catalyses the reaction 3-amino-2-oxopropyl phosphate + 1-deoxy-D-xylulose 5-phosphate = pyridoxine 5'-phosphate + phosphate + 2 H2O + H(+). The protein operates within cofactor biosynthesis; pyridoxine 5'-phosphate biosynthesis; pyridoxine 5'-phosphate from D-erythrose 4-phosphate: step 5/5. In terms of biological role, catalyzes the complicated ring closure reaction between the two acyclic compounds 1-deoxy-D-xylulose-5-phosphate (DXP) and 3-amino-2-oxopropyl phosphate (1-amino-acetone-3-phosphate or AAP) to form pyridoxine 5'-phosphate (PNP) and inorganic phosphate. The protein is Pyridoxine 5'-phosphate synthase of Prochlorococcus marinus (strain MIT 9211).